The chain runs to 423 residues: Glutamate-1-semialdehyde 2,1-aminomutase (423 aa).

Lysine 266 bears the N6-(pyridoxal phosphate)lysine mark.

The protein belongs to the class-III pyridoxal-phosphate-dependent aminotransferase family. HemL subfamily. In terms of assembly, homodimer. It depends on pyridoxal 5'-phosphate as a cofactor.

The protein localises to the cytoplasm. The enzyme catalyses (S)-4-amino-5-oxopentanoate = 5-aminolevulinate. It functions in the pathway porphyrin-containing compound metabolism; protoporphyrin-IX biosynthesis; 5-aminolevulinate from L-glutamyl-tRNA(Glu): step 2/2. This is Glutamate-1-semialdehyde 2,1-aminomutase from Nitratidesulfovibrio vulgaris (strain ATCC 29579 / DSM 644 / CCUG 34227 / NCIMB 8303 / VKM B-1760 / Hildenborough) (Desulfovibrio vulgaris).